The primary structure comprises 193 residues: Rho-related protein racF1 (193 aa).

Residue 10 to 17 (GDGAVGKT) coordinates GTP. An Effector region motif is present at residues 32-40 (YIPTVFDNY). GTP contacts are provided by residues 57 to 61 (DTAGQ) and 115 to 118 (TKQD). C190 is modified (cysteine methyl ester). C190 carries the S-geranylgeranyl cysteine lipid modification. Positions 191–193 (TIM) are cleaved as a propeptide — removed in mature form.

It belongs to the small GTPase superfamily. Rho family. In terms of assembly, interacts with pakB.

Its subcellular location is the membrane. In terms of biological role, might act in concert and/or share functions with other members of the RHO family in the regulation of a subset of cytoskeletal rearrangements that are required for these processes. In Dictyostelium discoideum (Social amoeba), this protein is Rho-related protein racF1 (racF1).